Reading from the N-terminus, the 68-residue chain is Protein SlyX homolog (68 aa).

It belongs to the SlyX family.

This is Protein SlyX homolog from Pseudomonas syringae pv. tomato (strain ATCC BAA-871 / DC3000).